The primary structure comprises 119 residues: Enhancer of yellow 2 transcription factor (119 aa).

Residues 93–119 (LTENETEGTDNHDDDEDDEDENGTEDN) are disordered. Residues 96–119 (NETEGTDNHDDDEDDEDENGTEDN) are compositionally biased toward acidic residues.

The protein belongs to the ENY2 family. In terms of assembly, component of the nuclear pore complex (NPC)-associated AMEX complex (anchoring and mRNA export complex), composed of at least e(y)2 and xmas-2. Component of the SAGA transcription coactivator-HAT complexes, at least composed of Ada2b, e(y)2, Pcaf/Gcn5, Taf10 and Nipped-A/Trrap. Within the SAGA complex, e(y)2, Sgf11, and not/nonstop form an additional subcomplex of SAGA called the DUB module (deubiquitination module). Component of the THO complex, composed of at least e(y)2, HPR1, THO2, THOC5, THOC6 and THOC7. Interacts with e(y)1. Interacts with su(Hw) (via zinc fingers). Interacts with xmas-2; required for localization to the nuclear periphery. Interacts with the nuclear pore complex (NPC).

It localises to the nucleus. The protein localises to the nucleoplasm. Its subcellular location is the cytoplasm. Involved in mRNA export coupled transcription activation by association with both the AMEX and the SAGA complexes. The SAGA complex is a multiprotein complex that activates transcription by remodeling chromatin and mediating histone acetylation and deubiquitination. Within the SAGA complex, participates in a subcomplex that specifically deubiquitinates histone H2B. The SAGA complex is recruited to specific gene promoters by activators, where it is required for transcription. Required for nuclear receptor-mediated transactivation. Involved in transcription elongation by recruiting the THO complex onto nascent mRNA. The AMEX complex functions in docking export-competent ribonucleoprotein particles (mRNPs) to the nuclear entrance of the nuclear pore complex (nuclear basket). AMEX participates in mRNA export and accurate chromatin positioning in the nucleus by tethering genes to the nuclear periphery. This Drosophila willistoni (Fruit fly) protein is Enhancer of yellow 2 transcription factor.